Reading from the N-terminus, the 256-residue chain is Probable sulfite/organosulfonate exporter TauE (256 aa).

The next 8 helical transmembrane spans lie at 5 to 25 (LLLPLLGLQALLGAGTYFQTV), 33 to 53 (IVMGVTSGLGLAPVATVAAVV), 76 to 96 (AVAAAAIGILPSVVVGVLVLE), 103 to 123 (ATLLQLLLGAVILYGGLSAAL), 142 to 162 (VFGGLLSGMFGVSGPPLIFQF), 172 to 190 (IRCALILVFTVTSTVRTLF), 199 to 219 (AAVCVQAAIAVPVVVIATLLG), and 236 to 256 (FGVLIGIGASLMLPAISAWVL).

It belongs to the 4-toluene sulfonate uptake permease (TSUP) (TC 2.A.102) family.

Its subcellular location is the cell inner membrane. Could be a sulfite/organosulfonate exporter with a wide substrate range, including 3-sulfolactate and 3-sulfopyruvate. This Cupriavidus necator (strain ATCC 17699 / DSM 428 / KCTC 22496 / NCIMB 10442 / H16 / Stanier 337) (Ralstonia eutropha) protein is Probable sulfite/organosulfonate exporter TauE.